A 434-amino-acid polypeptide reads, in one-letter code: Probable zinc metalloprotease PTRG_04772 (434 aa).

N-linked (GlcNAc...) asparagine glycosylation is present at N88. H111, D131, and E164 together coordinate Zn(2+). N-linked (GlcNAc...) asparagine glycosylation is present at N179. Zn(2+) is bound at residue D191. Residues N220, N299, N347, N353, N390, and N395 are each glycosylated (N-linked (GlcNAc...) asparagine). The Fibronectin type-III domain maps to 340–433; it reads SPTNVGINTT…LPFPFGCARN (94 aa).

It belongs to the peptidase M28 family. M28B subfamily. The cofactor is Zn(2+).

Its subcellular location is the secreted. This chain is Probable zinc metalloprotease PTRG_04772, found in Pyrenophora tritici-repentis (strain Pt-1C-BFP) (Wheat tan spot fungus).